The primary structure comprises 700 residues: uncharacterized protein (700 aa).

Positions 307, 310, 314, and 558 each coordinate [4Fe-4S] cluster.

The protein belongs to the AOR/FOR family. Requires [4Fe-4S] cluster as cofactor. Mo-molybdopterin is required as a cofactor. Tungstopterin serves as cofactor.

This is an uncharacterized protein from Escherichia coli (strain K12).